Reading from the N-terminus, the 156-residue chain is Small ribosomal subunit protein uS7 (156 aa).

It belongs to the universal ribosomal protein uS7 family. Part of the 30S ribosomal subunit. Contacts proteins S9 and S11.

In terms of biological role, one of the primary rRNA binding proteins, it binds directly to 16S rRNA where it nucleates assembly of the head domain of the 30S subunit. Is located at the subunit interface close to the decoding center, probably blocks exit of the E-site tRNA. The sequence is that of Small ribosomal subunit protein uS7 from Mycolicibacterium vanbaalenii (strain DSM 7251 / JCM 13017 / BCRC 16820 / KCTC 9966 / NRRL B-24157 / PYR-1) (Mycobacterium vanbaalenii).